A 91-amino-acid polypeptide reads, in one-letter code: Small ribosomal subunit protein uS19 (91 aa).

Belongs to the universal ribosomal protein uS19 family.

Its function is as follows. Protein S19 forms a complex with S13 that binds strongly to the 16S ribosomal RNA. The protein is Small ribosomal subunit protein uS19 of Prochlorococcus marinus (strain SARG / CCMP1375 / SS120).